A 226-amino-acid chain; its full sequence is Ribonuclease 3 (226 aa).

One can recognise an RNase III domain in the interval 7-129 (LPRLCRTLGY…IIGAIYLDSD (123 aa)). Glu42 provides a ligand contact to Mg(2+). The active site involves Asp46. Mg(2+) is bound by residues Asp115 and Glu118. The active site involves Glu118. In terms of domain architecture, DRBM spans 156–226 (DAKTLLQEYL…AAQVLELLKK (71 aa)).

This sequence belongs to the ribonuclease III family. As to quaternary structure, homodimer. Mg(2+) serves as cofactor.

The protein localises to the cytoplasm. It catalyses the reaction Endonucleolytic cleavage to 5'-phosphomonoester.. Its function is as follows. Digests double-stranded RNA. Involved in the processing of primary rRNA transcript to yield the immediate precursors to the large and small rRNAs (23S and 16S). Processes some mRNAs, and tRNAs when they are encoded in the rRNA operon. Processes pre-crRNA and tracrRNA of type II CRISPR loci if present in the organism. This Shewanella oneidensis (strain ATCC 700550 / JCM 31522 / CIP 106686 / LMG 19005 / NCIMB 14063 / MR-1) protein is Ribonuclease 3.